The following is a 136-amino-acid chain: Cytokine-like protein 1 (136 aa).

Residues 1-22 form the signal peptide; the sequence is MRTPGPLPVLLLLLAGAPAARP.

In terms of tissue distribution, specifically expressed in CD34+ hematopoietic cells.

Its subcellular location is the secreted. The chain is Cytokine-like protein 1 (CYTL1) from Homo sapiens (Human).